The primary structure comprises 299 residues: Nitrogenase iron protein (299 aa).

An ATP-binding site is contributed by 11–18; that stretch reads GKGGIGKS. Cys99 contributes to the [4Fe-4S] cluster binding site. At Arg102 the chain carries ADP-ribosylarginine; by dinitrogenase reductase ADP-ribosyltransferase. [4Fe-4S] cluster is bound at residue Cys133.

This sequence belongs to the NifH/BchL/ChlL family. As to quaternary structure, homodimer. [4Fe-4S] cluster serves as cofactor. Post-translationally, the reversible ADP-ribosylation of Arg-102 inactivates the nitrogenase reductase and regulates nitrogenase activity.

It carries out the reaction N2 + 8 reduced [2Fe-2S]-[ferredoxin] + 16 ATP + 16 H2O = H2 + 8 oxidized [2Fe-2S]-[ferredoxin] + 2 NH4(+) + 16 ADP + 16 phosphate + 6 H(+). In terms of biological role, the key enzymatic reactions in nitrogen fixation are catalyzed by the nitrogenase complex, which has 2 components: the iron protein and the molybdenum-iron protein. This Rhodopseudomonas palustris (strain BisB5) protein is Nitrogenase iron protein.